Reading from the N-terminus, the 771-residue chain is Tetratricopeptide repeat-containing protein trd-1 (771 aa).

6 TPR repeats span residues 389-415, 416-449, 451-484, 485-518, 520-552, and 553-586; these read LEMWDGVIDCYKQLGQMDKAETLIRRL, IEQKPNDSMLHVYLGDITRNLEYFTKAIELSDDR, ARAHRSLGHLLLMDKKFEEAYKHLRRSLELQPIQ, LGTWFNAGYCAWKLENFKESTQCYHRCVSLQPDH, EAWNNLSAAYIRHGQKPKAWKLLQEALKYNYEH, and PNVWENYMLLSVDVGEFSQAIQAYHRLLDMNKRG.

The protein belongs to the TTC27 family. In terms of tissue distribution, expressed in the spermatheca.

It is found in the cytoplasm. Functionally, developmental protein required for cell fate determination in both the germline and seam cells of the developing epidermis. Specifically, involved in sex determination and may function in parallel or downstream of other sex determination factors, including tra-2 and fem-3, to promote oogenesis in its role in the regulation of the switch from spermatogenesis to oogenesis in the gonads. Also implicated in the mitosis to meiosis switch in distal tip cells. The polypeptide is Tetratricopeptide repeat-containing protein trd-1 (Caenorhabditis elegans).